Consider the following 217-residue polypeptide: UPF0319 protein VP1009 (217 aa).

Positions 1-21 (MRLKTWIVAFFLGLFGTTVNA) are cleaved as a signal peptide.

This sequence belongs to the UPF0319 family.

In Vibrio parahaemolyticus serotype O3:K6 (strain RIMD 2210633), this protein is UPF0319 protein VP1009.